The primary structure comprises 420 residues: Probable glycosyltransferase YdaM (420 aa).

Helical transmembrane passes span 4 to 24, 299 to 319, 332 to 352, and 371 to 391; these read TLFF…MFLM, IIFD…GVIM, LHLS…FLFM, and FFIV…LVIY.

The protein belongs to the glycosyltransferase 2 family.

The protein resides in the cell membrane. In Bacillus subtilis (strain 168), this protein is Probable glycosyltransferase YdaM (ydaM).